A 280-amino-acid chain; its full sequence is Phosphatidylglycerol--prolipoprotein diacylglyceryl transferase (280 aa).

A run of 3 helical transmembrane segments spans residues 21–41 (WYGIIMAVAIVLATWMAISEG), 54–74 (LLLWAVPLGYVGARIYYVIFE), and 88–108 (IWNGGIAIYGGLIAGLIVLLI). Arginine 136 lines the a 1,2-diacyl-sn-glycero-3-phospho-(1'-sn-glycerol) pocket. The next 3 helical transmembrane spans lie at 176-196 (QPTFLYESFFNLIGLIIILSL), 206-226 (GEVFMSYLLWYSVVRFFVEGM), and 236-256 (IIRVSQALSLVLFIATIILWI).

Belongs to the Lgt family.

The protein localises to the cell membrane. It carries out the reaction L-cysteinyl-[prolipoprotein] + a 1,2-diacyl-sn-glycero-3-phospho-(1'-sn-glycerol) = an S-1,2-diacyl-sn-glyceryl-L-cysteinyl-[prolipoprotein] + sn-glycerol 1-phosphate + H(+). It functions in the pathway protein modification; lipoprotein biosynthesis (diacylglyceryl transfer). Functionally, catalyzes the transfer of the diacylglyceryl group from phosphatidylglycerol to the sulfhydryl group of the N-terminal cysteine of a prolipoprotein, the first step in the formation of mature lipoproteins. The sequence is that of Phosphatidylglycerol--prolipoprotein diacylglyceryl transferase from Lactobacillus acidophilus (strain ATCC 700396 / NCK56 / N2 / NCFM).